The chain runs to 110 residues: Ribonuclease P protein component 4 (110 aa).

Positions 65, 68, 94, and 97 each coordinate Zn(2+).

Belongs to the eukaryotic/archaeal RNase P protein component 4 family. Consists of a catalytic RNA component and at least 4-5 protein subunits. Requires Zn(2+) as cofactor.

It localises to the cytoplasm. The catalysed reaction is Endonucleolytic cleavage of RNA, removing 5'-extranucleotides from tRNA precursor.. Part of ribonuclease P, a protein complex that generates mature tRNA molecules by cleaving their 5'-ends. The protein is Ribonuclease P protein component 4 of Methanococcus maripaludis (strain C5 / ATCC BAA-1333).